A 192-amino-acid polypeptide reads, in one-letter code: 3-hydroxyanthranilate 3,4-dioxygenase (192 aa).

Arg50 is a binding site for O2. Fe cation contacts are provided by His54, Glu60, and His102. Position 60 (Glu60) interacts with substrate. Residues Arg106 and Glu116 each coordinate substrate. Residues Cys131, Cys134, Cys168, and Cys171 each contribute to the a divalent metal cation site.

The protein belongs to the 3-HAO family. The cofactor is Fe(2+).

Its subcellular location is the cytoplasm. The enzyme catalyses 3-hydroxyanthranilate + O2 = (2Z,4Z)-2-amino-3-carboxymuconate 6-semialdehyde. It functions in the pathway cofactor biosynthesis; NAD(+) biosynthesis; quinolinate from L-kynurenine: step 3/3. Catalyzes the oxidative ring opening of 3-hydroxyanthranilate to 2-amino-3-carboxymuconate semialdehyde, which spontaneously cyclizes to quinolinate. The chain is 3-hydroxyanthranilate 3,4-dioxygenase from Coccidioides immitis (strain RS) (Valley fever fungus).